A 241-amino-acid polypeptide reads, in one-letter code: Probable xyloglucan-specific endo-beta-1,4-glucanase A (241 aa).

The first 18 residues, 1–18, serve as a signal peptide directing secretion; that stretch reads MKFNLALALSLTVATAEA.

Belongs to the glycosyl hydrolase 12 (cellulase H) family.

Its subcellular location is the secreted. It carries out the reaction xyloglucan + H2O = xyloglucan oligosaccharides.. In terms of biological role, catalyzes endohydrolysis of 1,4-beta-D-glucosidic linkages in xyloglucan with retention of the beta-configuration of the glycosyl residues. Specific for xyloglucan and does not hydrolyze other cell wall components. This is Probable xyloglucan-specific endo-beta-1,4-glucanase A (xgeA) from Aspergillus clavatus (strain ATCC 1007 / CBS 513.65 / DSM 816 / NCTC 3887 / NRRL 1 / QM 1276 / 107).